The following is a 993-amino-acid chain: NACHT, LRR and PYD domains-containing protein 14 (993 aa).

The region spanning 81-403 is the NACHT domain; it reads QTVVLQGAAG…FYLLRENLEE (323 aa). 87-94 lines the ATP pocket; it reads GAAGIGKT. LRR repeat units lie at residues 636 to 657, 660 to 680, 688 to 708, 717 to 738, 745 to 765, 774 to 795, 802 to 822, 831 to 852, and 859 to 879; these read DLKETDLGVNGLKTLCEALKCK, KLRVLRLASCDLNVARCQKLS, SLVFLNLSLNNLSNDGVKSLC, SLERLALASCGLTKAGCKVLSS, RLTHLCLSDNVLEDEGIKLLS, TLQSLVLRSCSFTPIGSEHLST, SLVHLDLGQNKLADNGVKLLC, NLQELELMSCVLTSKACGDLAS, and NLWSLDLGHNILDDAGLNILC.

The protein belongs to the NLRP family. In terms of tissue distribution, detected in adult ovary and testis. Detected in oocytes and in germ cell elements in seminiferous tubules in adult testis (at protein level).

It localises to the cytoplasm. Its function is as follows. May be involved in inflammation and spermatogenesis. The sequence is that of NACHT, LRR and PYD domains-containing protein 14 (Nlrp14) from Mus musculus (Mouse).